We begin with the raw amino-acid sequence, 177 residues long: ATP synthase subunit delta (177 aa).

Belongs to the ATPase delta chain family. F-type ATPases have 2 components, F(1) - the catalytic core - and F(0) - the membrane proton channel. F(1) has five subunits: alpha(3), beta(3), gamma(1), delta(1), epsilon(1). F(0) has three main subunits: a(1), b(2) and c(10-14). The alpha and beta chains form an alternating ring which encloses part of the gamma chain. F(1) is attached to F(0) by a central stalk formed by the gamma and epsilon chains, while a peripheral stalk is formed by the delta and b chains.

It is found in the cell inner membrane. In terms of biological role, f(1)F(0) ATP synthase produces ATP from ADP in the presence of a proton or sodium gradient. F-type ATPases consist of two structural domains, F(1) containing the extramembraneous catalytic core and F(0) containing the membrane proton channel, linked together by a central stalk and a peripheral stalk. During catalysis, ATP synthesis in the catalytic domain of F(1) is coupled via a rotary mechanism of the central stalk subunits to proton translocation. Its function is as follows. This protein is part of the stalk that links CF(0) to CF(1). It either transmits conformational changes from CF(0) to CF(1) or is implicated in proton conduction. This chain is ATP synthase subunit delta, found in Shewanella woodyi (strain ATCC 51908 / MS32).